The sequence spans 209 residues: ATP-dependent Clp protease proteolytic subunit (209 aa).

Ser-101 functions as the Nucleophile in the catalytic mechanism. His-126 is an active-site residue.

This sequence belongs to the peptidase S14 family. In terms of assembly, component of the chloroplastic Clp protease core complex.

It is found in the plastid. Its subcellular location is the chloroplast stroma. The catalysed reaction is Hydrolysis of proteins to small peptides in the presence of ATP and magnesium. alpha-casein is the usual test substrate. In the absence of ATP, only oligopeptides shorter than five residues are hydrolyzed (such as succinyl-Leu-Tyr-|-NHMec, and Leu-Tyr-Leu-|-Tyr-Trp, in which cleavage of the -Tyr-|-Leu- and -Tyr-|-Trp bonds also occurs).. Its function is as follows. Cleaves peptides in various proteins in a process that requires ATP hydrolysis. Has a chymotrypsin-like activity. Plays a major role in the degradation of misfolded proteins. In Huperzia lucidula (Shining clubmoss), this protein is ATP-dependent Clp protease proteolytic subunit.